Here is a 340-residue protein sequence, read N- to C-terminus: Serine/threonine-protein kinase PDIK1L (340 aa).

One can recognise a Protein kinase domain in the interval Tyr8 to Phe333. Residues Val14–Val22 and Lys37 contribute to the ATP site. Asp164 (proton acceptor) is an active-site residue.

Belongs to the protein kinase superfamily. Ser/Thr protein kinase family.

Its subcellular location is the nucleus. It carries out the reaction L-seryl-[protein] + ATP = O-phospho-L-seryl-[protein] + ADP + H(+). The catalysed reaction is L-threonyl-[protein] + ATP = O-phospho-L-threonyl-[protein] + ADP + H(+). In Pongo abelii (Sumatran orangutan), this protein is Serine/threonine-protein kinase PDIK1L (PDIK1L).